A 103-amino-acid polypeptide reads, in one-letter code: MAQFVRNLVEKTPALVNAAVTYSKPRLATFWYYAKVELVPPTPAEIPRAIQSLKKIVNSAQTGSFKQLTVKEAVLNGLVATEVLMWFYVGEIIGKRGIIGYDV.

N-acetylalanine is present on alanine 2. An N6-acetyllysine mark is found at lysine 11, lysine 24, lysine 35, and lysine 54.

It belongs to the ATPase g subunit family. In terms of assembly, component of the ATP synthase complex composed at least of ATP5F1A/subunit alpha, ATP5F1B/subunit beta, ATP5MC1/subunit c (homooctomer), MT-ATP6/subunit a, MT-ATP8/subunit 8, ATP5ME/subunit e, ATP5MF/subunit f, ATP5MG/subunit g, ATP5MK/subunit k, ATP5MJ/subunit j, ATP5F1C/subunit gamma, ATP5F1D/subunit delta, ATP5F1E/subunit epsilon, ATP5PF/subunit F6, ATP5PB/subunit b, ATP5PD/subunit d, ATP5PO/subunit OSCP. ATP synthase complex consists of a soluble F(1) head domain (subunits alpha(3) and beta(3)) - the catalytic core - and a membrane F(0) domain - the membrane proton channel (subunits c, a, 8, e, f, g, k and j). These two domains are linked by a central stalk (subunits gamma, delta, and epsilon) rotating inside the F1 region and a stationary peripheral stalk (subunits F6, b, d, and OSCP).

It localises to the mitochondrion. It is found in the mitochondrion inner membrane. Subunit g, of the mitochondrial membrane ATP synthase complex (F(1)F(0) ATP synthase or Complex V) that produces ATP from ADP in the presence of a proton gradient across the membrane which is generated by electron transport complexes of the respiratory chain. ATP synthase complex consist of a soluble F(1) head domain - the catalytic core - and a membrane F(1) domain - the membrane proton channel. These two domains are linked by a central stalk rotating inside the F(1) region and a stationary peripheral stalk. During catalysis, ATP synthesis in the catalytic domain of F(1) is coupled via a rotary mechanism of the central stalk subunits to proton translocation. In vivo, can only synthesize ATP although its ATP hydrolase activity can be activated artificially in vitro. Part of the complex F(0) domain. The chain is ATP synthase F(0) complex subunit g, mitochondrial from Homo sapiens (Human).